Consider the following 284-residue polypeptide: F-box only protein 6 (284 aa).

The region spanning 1–48 (MVNINELPENILLELFTHVPAPQLLRNCRLVCSLWRDLIDVMTLWKRK) is the F-box domain. The FBA domain maps to 69–250 (FYILCSLQRN…VTNSSIIVSH (182 aa)). Phosphoserine is present on residues Ser249, Ser268, Ser275, Ser278, and Ser283.

In terms of assembly, part of a SCF (SKP1-cullin-F-box) protein ligase complex. Interacts with VCP, CHEK1 and CUL1.

It localises to the cytoplasm. Its pathway is protein modification; protein ubiquitination. Substrate-recognition component of some SCF (SKP1-CUL1-F-box protein)-type E3 ubiquitin ligase complexes. Involved in endoplasmic reticulum-associated degradation pathway (ERAD) for misfolded lumenal proteins by recognizing and binding sugar chains on unfolded glycoproteins that are retrotranslocated into the cytosol and promoting their ubiquitination and subsequent degradation. Able to recognize and bind denatured glycoproteins, which are modified with not only high-mannose but also complex-type oligosaccharides. Also recognizes sulfated glycans. Also involved in DNA damage response by specifically recognizing activated CHEK1 (phosphorylated on 'Ser-345'), promoting its ubiquitination and degradation. Ubiquitination of CHEK1 is required to ensure that activated CHEK1 does not accumulate as cells progress through S phase, or when replication forks encounter transient impediments during normal DNA replication. This is F-box only protein 6 (Fbxo6) from Rattus norvegicus (Rat).